Reading from the N-terminus, the 128-residue chain is Fluoride-specific ion channel FluC (128 aa).

The next 4 helical transmembrane spans lie at 2-22 (LTFA…GAWL), 37-57 (WGTL…VALI), 65-85 (AWIR…FSTF), and 101-121 (AAAY…LGLA). Na(+) contacts are provided by Gly77 and Thr80.

This sequence belongs to the fluoride channel Fluc/FEX (TC 1.A.43) family.

The protein resides in the cell inner membrane. The catalysed reaction is fluoride(in) = fluoride(out). With respect to regulation, na(+) is not transported, but it plays an essential structural role and its presence is essential for fluoride channel function. Functionally, fluoride-specific ion channel. Important for reducing fluoride concentration in the cell, thus reducing its toxicity. This chain is Fluoride-specific ion channel FluC, found in Bordetella bronchiseptica (strain ATCC BAA-588 / NCTC 13252 / RB50) (Alcaligenes bronchisepticus).